A 61-amino-acid polypeptide reads, in one-letter code: Large ribosomal subunit protein uL30 (61 aa).

The protein belongs to the universal ribosomal protein uL30 family. As to quaternary structure, part of the 50S ribosomal subunit.

This chain is Large ribosomal subunit protein uL30, found in Acidithiobacillus ferrooxidans (strain ATCC 23270 / DSM 14882 / CIP 104768 / NCIMB 8455) (Ferrobacillus ferrooxidans (strain ATCC 23270)).